We begin with the raw amino-acid sequence, 190 residues long: MSEDTALVVGLGNPGPQYEKTRHNVGFMVAGVLSARMGGKFSAHKKSGAEIVQGRLEGRPTILAKPRSFMNLSGSAVAGLARFFSVDPGNIVVIHDELDLDFGTIRLKQGGGEGGHNGLRSISQSLGTKDYLRTRVGIGRPPGRMDPASYVLKPFSSVERKELDLVCEESADAVELVLRLGLEAAQNRLH.

Y18 is a binding site for tRNA. H23 acts as the Proton acceptor in catalysis. F69, N71, and N117 together coordinate tRNA.

This sequence belongs to the PTH family. Monomer.

Its subcellular location is the cytoplasm. The catalysed reaction is an N-acyl-L-alpha-aminoacyl-tRNA + H2O = an N-acyl-L-amino acid + a tRNA + H(+). In terms of biological role, hydrolyzes ribosome-free peptidyl-tRNAs (with 1 or more amino acids incorporated), which drop off the ribosome during protein synthesis, or as a result of ribosome stalling. Functionally, catalyzes the release of premature peptidyl moieties from peptidyl-tRNA molecules trapped in stalled 50S ribosomal subunits, and thus maintains levels of free tRNAs and 50S ribosomes. The sequence is that of Peptidyl-tRNA hydrolase from Rhodococcus opacus (strain B4).